Here is a 145-residue protein sequence, read N- to C-terminus: Acidic phospholipase A2 (145 aa).

Residues 1 to 19 (MNPAHLLILSAVCVSLLGA) form the signal peptide. The propeptide occupies 20 to 27 (ANVPPQHL). Cystine bridges form between Cys-38-Cys-97, Cys-52-Cys-144, Cys-54-Cys-70, Cys-69-Cys-125, Cys-76-Cys-118, Cys-86-Cys-111, and Cys-104-Cys-116. 3 residues coordinate Ca(2+): Tyr-53, Gly-55, and Gly-57. The active site involves His-73. Ca(2+) is bound at residue Asp-74. Residue Asp-119 is part of the active site.

The protein belongs to the phospholipase A2 family. Group I subfamily. D49 sub-subfamily. Ca(2+) is required as a cofactor. Expressed by the venom gland.

Its subcellular location is the secreted. It carries out the reaction a 1,2-diacyl-sn-glycero-3-phosphocholine + H2O = a 1-acyl-sn-glycero-3-phosphocholine + a fatty acid + H(+). In terms of biological role, PLA2 catalyzes the calcium-dependent hydrolysis of the 2-acyl groups in 3-sn-phosphoglycerides. The polypeptide is Acidic phospholipase A2 (Bungarus multicinctus (Many-banded krait)).